The following is a 138-amino-acid chain: Small ribosomal subunit protein uS8c (138 aa).

This sequence belongs to the universal ribosomal protein uS8 family. As to quaternary structure, part of the 30S ribosomal subunit.

Its subcellular location is the plastid. The protein localises to the chloroplast. Functionally, one of the primary rRNA binding proteins, it binds directly to 16S rRNA central domain where it helps coordinate assembly of the platform of the 30S subunit. The polypeptide is Small ribosomal subunit protein uS8c (rps8) (Chlorella vulgaris (Green alga)).